The primary structure comprises 274 residues: Protein YehF (274 aa).

The region spanning 2 to 78 (RHFIYQDEKS…KDNSLQPSQT (77 aa)) is the WGR domain.

Has been implicated in selenate reduction; a mini-Tn10 insertion mutant in 'molR', (which was mapped to 47.3 centisomes i.e. this locus), is defective in the reduction of selenate. The protein is Protein YehF (yehF) of Escherichia coli (strain K12).